The primary structure comprises 191 residues: Neuronal calcium sensor 1 (191 aa).

Gly-2 carries the N-myristoyl glycine lipid modification. 4 consecutive EF-hand domains span residues 24-59 (EAEI…FPFG), 60-95 (DPSK…TSRG), 96-131 (TVEE…IYRM), and 144-179 (TPEK…DPTI). 13 residues coordinate Ca(2+): Asp-73, Asn-75, Asp-77, Glu-84, Asp-109, Asp-111, Asp-113, Glu-120, Asp-157, Asn-159, Asp-161, Lys-163, and Glu-168.

The protein belongs to the recoverin family.

Its function is as follows. Neuronal calcium sensor, regulator of G protein-coupled receptor phosphorylation in a calcium dependent manner. Regulates neurite extension and branching by activity-dependent (Ca2+) influx in growth cones. The polypeptide is Neuronal calcium sensor 1 (Aplysia californica (California sea hare)).